Here is a 632-residue protein sequence, read N- to C-terminus: Pescadillo homolog (632 aa).

Residues 306-341 are disordered; it reads GDDADVDMDEGAKETDEEEDEDFVERPSKAQEVDDV. A compositionally biased stretch (acidic residues) spans 307–328; that stretch reads DDADVDMDEGAKETDEEEDEDF. One can recognise a BRCT domain in the interval 361 to 459; that stretch reads RQNLLFSPYT…KIISSEGYGP (99 aa). Disordered regions lie at residues 485 to 535, 565 to 585, and 601 to 632; these read GEKA…QNPS, TKVH…EEDL, and MQYS…EAKA. The segment covering 492–516 has biased composition (acidic residues); the sequence is QEGEEEEEAAEQDEGESEDEEEDGK. A compositionally biased stretch (low complexity) spans 521–531; the sequence is AEYPPALLAAA. Composition is skewed to basic and acidic residues over residues 576–585 and 605–616; these read QKEKKGEEDL and NREKAAEKEKLE. The stretch at 595-632 forms a coiled coil; it reads AKLYEKMQYSNREKAAEKEKLEKKRKAIEKRKAKEAKA.

The protein belongs to the pescadillo family. In terms of assembly, component of the NOP7 complex, composed of ERB1, NOP7 and YTM1. The complex is held together by ERB1, which interacts with NOP7 via its N-terminal domain and with YTM1 via a high-affinity interaction between the seven-bladed beta-propeller domains of the 2 proteins. The NOP7 complex associates with the 66S pre-ribosome.

The protein resides in the nucleus. It is found in the nucleolus. It localises to the nucleoplasm. Its function is as follows. Component of the NOP7 complex, which is required for maturation of the 25S and 5.8S ribosomal RNAs and formation of the 60S ribosome. The sequence is that of Pescadillo homolog from Cryptococcus neoformans var. neoformans serotype D (strain B-3501A) (Filobasidiella neoformans).